Here is a 126-residue protein sequence, read N- to C-terminus: MARIAGVDLPRDKRVEIGLTYIYGIGLSRAQEIIAATGVNPDTRVKDLSDADVTALRGEIESNYQVEGDLRRLESLNIKRLVDIGTYRGRRHRMGLPVRGQRTRTNARTRRGRRQTVAGKKKAPGK.

Residues 92–126 (HRMGLPVRGQRTRTNARTRRGRRQTVAGKKKAPGK) form a disordered region. A compositionally biased stretch (basic residues) spans 101–126 (QRTRTNARTRRGRRQTVAGKKKAPGK).

This sequence belongs to the universal ribosomal protein uS13 family. In terms of assembly, part of the 30S ribosomal subunit. Forms a loose heterodimer with protein S19. Forms two bridges to the 50S subunit in the 70S ribosome.

In terms of biological role, located at the top of the head of the 30S subunit, it contacts several helices of the 16S rRNA. In the 70S ribosome it contacts the 23S rRNA (bridge B1a) and protein L5 of the 50S subunit (bridge B1b), connecting the 2 subunits; these bridges are implicated in subunit movement. Contacts the tRNAs in the A and P-sites. This chain is Small ribosomal subunit protein uS13, found in Nostoc punctiforme (strain ATCC 29133 / PCC 73102).